Consider the following 893-residue polypeptide: DNA mismatch repair protein MutS (893 aa).

638–645 (GPNMAGKS) lines the ATP pocket.

Belongs to the DNA mismatch repair MutS family.

Its function is as follows. This protein is involved in the repair of mismatches in DNA. It is possible that it carries out the mismatch recognition step. This protein has a weak ATPase activity. This is DNA mismatch repair protein MutS from Lawsonia intracellularis (strain PHE/MN1-00).